Reading from the N-terminus, the 508-residue chain is Maturase K (508 aa).

This sequence belongs to the intron maturase 2 family. MatK subfamily.

It is found in the plastid. It localises to the chloroplast. Functionally, usually encoded in the trnK tRNA gene intron. Probably assists in splicing its own and other chloroplast group II introns. This Cunninghamia lanceolata (China fir) protein is Maturase K.